Reading from the N-terminus, the 415-residue chain is Esterase FrsA (415 aa).

This sequence belongs to the FrsA family. In terms of assembly, monomer in solution. Homodimer. Forms a 1:1 complex with the unphosphorylated form of the EIIA component of the glucose-specific PTS system (IIAGlc).

It catalyses the reaction a carboxylic ester + H2O = an alcohol + a carboxylate + H(+). In terms of biological role, catalyzes the hydrolysis of esters. In vitro, prefers short chain alkanoate ester as substrate. Displays highest activity towards p-nitrophenyl acetate (pNPA). Has weaker activity towards p-nitrophenyl butyrate (pNPB). The polypeptide is Esterase FrsA (Vibrio vulnificus (strain CMCP6)).